We begin with the raw amino-acid sequence, 364 residues long: MAQQTPLYEQHTLCGARMVDFHGWMMPLHYGSQLDEHHAVRTDAGMFDVSHMTIVDLHGSRTREFLRYLLANDVAKLTKTGKALYSGMLNASGGVIDDLIVYYFTEDFFRLVVNSATREKDLAWITQHAEPYAIDITVRDDLSLIAVQGPNAQEKAATLFTEEQRNAVEGMKPFFGVQAGDLFIATTGYTGEAGYEIAMPNEKAADFWRALVEAGVKPCGLGARDTLRLEAGMNLYGQEMDEGISPLAANMGWTIAWEPTDRDFIGREALEMQREKGHEQLVGLVMTEKGVLRNELPVRFTDAQGNQQEGIITSGTFSPTLGYSIALARVPAGIGETAIVQIRNREMPVKVTKPVFVRNGKAVA.

It belongs to the GcvT family. In terms of assembly, the glycine cleavage system is composed of four proteins: P, T, L and H.

It carries out the reaction N(6)-[(R)-S(8)-aminomethyldihydrolipoyl]-L-lysyl-[protein] + (6S)-5,6,7,8-tetrahydrofolate = N(6)-[(R)-dihydrolipoyl]-L-lysyl-[protein] + (6R)-5,10-methylene-5,6,7,8-tetrahydrofolate + NH4(+). In terms of biological role, the glycine cleavage system catalyzes the degradation of glycine. The sequence is that of Aminomethyltransferase from Salmonella arizonae (strain ATCC BAA-731 / CDC346-86 / RSK2980).